The following is a 788-amino-acid chain: Endonuclease MutS2 (788 aa).

Residue 332–339 (GPNTGGKT) coordinates ATP. The 76-residue stretch at 713 to 788 (VDLRGMDAEE…GTGVTVVELK (76 aa)) folds into the Smr domain.

Belongs to the DNA mismatch repair MutS family. MutS2 subfamily. As to quaternary structure, homodimer. Binds to stalled ribosomes, contacting rRNA.

Functionally, endonuclease that is involved in the suppression of homologous recombination and thus may have a key role in the control of bacterial genetic diversity. Its function is as follows. Acts as a ribosome collision sensor, splitting the ribosome into its 2 subunits. Detects stalled/collided 70S ribosomes which it binds and splits by an ATP-hydrolysis driven conformational change. Acts upstream of the ribosome quality control system (RQC), a ribosome-associated complex that mediates the extraction of incompletely synthesized nascent chains from stalled ribosomes and their subsequent degradation. Probably generates substrates for RQC. The chain is Endonuclease MutS2 from Clostridium botulinum (strain Langeland / NCTC 10281 / Type F).